The sequence spans 121 residues: Small ribosomal subunit protein uS13 (121 aa).

The disordered stretch occupies residues 91 to 121 (HRRGLPVRGQNSKNNARTRKGPRRTVANKKK). Positions 106–121 (ARTRKGPRRTVANKKK) are enriched in basic residues.

It belongs to the universal ribosomal protein uS13 family. Part of the 30S ribosomal subunit. Forms a loose heterodimer with protein S19. Forms two bridges to the 50S subunit in the 70S ribosome.

Its function is as follows. Located at the top of the head of the 30S subunit, it contacts several helices of the 16S rRNA. In the 70S ribosome it contacts the 23S rRNA (bridge B1a) and protein L5 of the 50S subunit (bridge B1b), connecting the 2 subunits; these bridges are implicated in subunit movement. Contacts the tRNAs in the A and P-sites. This is Small ribosomal subunit protein uS13 from Bacillus cereus (strain G9842).